The sequence spans 151 residues: Probable cGMP 3',5'-cyclic phosphodiesterase subunit delta (151 aa).

It belongs to the PDE6D/unc-119 family. In terms of assembly, interacts with Pde6.

The protein localises to the nucleus. It is found in the cytoplasm. This Drosophila mojavensis (Fruit fly) protein is Probable cGMP 3',5'-cyclic phosphodiesterase subunit delta.